Here is a 346-residue protein sequence, read N- to C-terminus: PPE family protein PPE17 (346 aa).

Residues 6–159 are PPE; sequence FPPEFNSLNI…LYATMAAAAA (154 aa).

Belongs to the mycobacterial PPE family. Interacts with LRR motifs 15-20 of host Toll-like receptor 2 (TLR2).

Its subcellular location is the secreted. It localises to the cell wall. The protein localises to the cell surface. In terms of biological role, induces pro-inflammatory responses. Induces host TLR1/2 heterodimerization, which causes an increased recruitment of IRAK1, MYD88, and protein kinase C epsilon (PRKCE) to the downstream TLR-signaling complex that translocates PRKCE into the nucleus in an IRAK1-dependent manner. PRKCE-mediated phosphorylation allowed the nuclear IRAK3 to be exported to the cytoplasm, leading to increased activation of ERK1/2, stabilization of MAPK phosphatase 1 (MKP1), and induction of TNF-alpha with concomitant down-regulation of MAP kinase p38. During M.tuberculosis and HIV-1 co-infection, can stimulate transcription from the long terminal repeat (LTR) of HIV-1 in monocyte/macrophage cells. Interaction with human TLR2 activates the NF-kappa-B transcription factor, which binds to the promoter region of the HIV-1 and induces HIV-1 gene expression. In Mycobacterium tuberculosis (strain ATCC 25618 / H37Rv), this protein is PPE family protein PPE17 (PPE17).